The chain runs to 723 residues: Lim and transglutaminase domain protein ltd-1 (723 aa).

The LIM zinc-binding domain maps to 5–72 (QHCNRCGKQV…SNHVPIAGPH (68 aa)).

The protein belongs to the transglutaminase-like superfamily. As to expression, expressed in the Y and U rectal epithelial cells, in marginal cells of the terminal bulb and isthmus of the pharynx (at protein level).

The protein localises to the cytoplasm. Its subcellular location is the cytoskeleton. In terms of biological role, cytoskeleton-associated protein. May play a role in hypodermal cell development. The protein is Lim and transglutaminase domain protein ltd-1 of Caenorhabditis elegans.